We begin with the raw amino-acid sequence, 106 residues long: Cell cycle protein GpsB (106 aa).

The stretch at 34–67 (LDVIIQDYDNFKQEIDRLKAENEKLKKSTPAVEQ) forms a coiled coil. Residues 55 to 83 (NEKLKKSTPAVEQSRSRSQQPPTSQVNYD) form a disordered region. Over residues 70–79 (SRSQQPPTSQ) the composition is skewed to low complexity.

This sequence belongs to the GpsB family. Forms polymers through the coiled coil domains. Interacts with PBP1, MreC and EzrA.

It localises to the cytoplasm. Its function is as follows. Divisome component that associates with the complex late in its assembly, after the Z-ring is formed, and is dependent on DivIC and PBP2B for its recruitment to the divisome. Together with EzrA, is a key component of the system that regulates PBP1 localization during cell cycle progression. Its main role could be the removal of PBP1 from the cell pole after pole maturation is completed. Also contributes to the recruitment of PBP1 to the division complex. Not essential for septum formation. This Oceanobacillus iheyensis (strain DSM 14371 / CIP 107618 / JCM 11309 / KCTC 3954 / HTE831) protein is Cell cycle protein GpsB.